The sequence spans 603 residues: Glutamyl-tRNA(Gln) amidotransferase subunit B, mitochondrial (603 aa).

Residues 1–32 (MIRHRLRLALSAAPVTATGRRTRSKTAPRRSL) constitute a mitochondrion transit peptide. The interval 12–59 (AAPVTATGRRTRSKTAPRRSLSTQQTQSSASSSSNNLDGDGRAFVPLR) is disordered. Positions 31 to 48 (SLSTQQTQSSASSSSNNL) are enriched in low complexity.

It belongs to the GatB/GatE family. GatB subfamily. As to quaternary structure, subunit of the heterotrimeric GatCAB amidotransferase (AdT) complex, composed of A, B and C subunits.

The protein resides in the mitochondrion. It carries out the reaction L-glutamyl-tRNA(Gln) + L-glutamine + ATP + H2O = L-glutaminyl-tRNA(Gln) + L-glutamate + ADP + phosphate + H(+). Allows the formation of correctly charged Gln-tRNA(Gln) through the transamidation of misacylated Glu-tRNA(Gln) in the mitochondria. The reaction takes place in the presence of glutamine and ATP through an activated gamma-phospho-Glu-tRNA(Gln). In Arthroderma otae (strain ATCC MYA-4605 / CBS 113480) (Microsporum canis), this protein is Glutamyl-tRNA(Gln) amidotransferase subunit B, mitochondrial.